The following is a 448-amino-acid chain: Glutamyl-tRNA(Gln) amidotransferase subunit D (448 aa).

Residues 92–423 (SEVKIISTGG…DKIRSLMLTN (332 aa)) enclose the Asparaginase/glutaminase domain. Residues Thr-102, Thr-178, Asp-179, and Lys-257 contribute to the active site.

This sequence belongs to the asparaginase 1 family. GatD subfamily. As to quaternary structure, heterodimer of GatD and GatE.

The enzyme catalyses L-glutamyl-tRNA(Gln) + L-glutamine + ATP + H2O = L-glutaminyl-tRNA(Gln) + L-glutamate + ADP + phosphate + H(+). Its function is as follows. Allows the formation of correctly charged Gln-tRNA(Gln) through the transamidation of misacylated Glu-tRNA(Gln) in organisms which lack glutaminyl-tRNA synthetase. The reaction takes place in the presence of glutamine and ATP through an activated gamma-phospho-Glu-tRNA(Gln). The GatDE system is specific for glutamate and does not act on aspartate. The chain is Glutamyl-tRNA(Gln) amidotransferase subunit D from Sulfurisphaera tokodaii (strain DSM 16993 / JCM 10545 / NBRC 100140 / 7) (Sulfolobus tokodaii).